Reading from the N-terminus, the 182-residue chain is MSRIGRKPIDIPSGVDVKIDGNVITVKGPKGTLTREIHPEMIVKIENNQIIVQRPSDERFHKALHGLTRTLIANMVEGVTKGYEKVLEVVGIGYRAQKQGKKLVLNVGYSHPVEIEEPAGITIEVPDQNRIVVKGIDKQQVGNFAANIRKVREPDPYLGKGIKYADEVLRLKEGKAGKGGKK.

The protein belongs to the universal ribosomal protein uL6 family. In terms of assembly, part of the 50S ribosomal subunit.

This protein binds to the 23S rRNA, and is important in its secondary structure. It is located near the subunit interface in the base of the L7/L12 stalk, and near the tRNA binding site of the peptidyltransferase center. The polypeptide is Large ribosomal subunit protein uL6 (Caldicellulosiruptor bescii (strain ATCC BAA-1888 / DSM 6725 / KCTC 15123 / Z-1320) (Anaerocellum thermophilum)).